The following is a 95-amino-acid chain: MKTLLLTLVVVTIVCLDLGYTIVCHTTATSPISAVTCPPGENLCYRKMWCDVFCSSRGKVVELGCAATCPSKKPYEEVTCCSTDKCNPHPKQRPG.

Positions 1 to 21 (MKTLLLTLVVVTIVCLDLGYT) are cleaved as a signal peptide. Disulfide bonds link Cys24-Cys44, Cys37-Cys65, Cys50-Cys54, Cys69-Cys80, and Cys81-Cys86.

Belongs to the three-finger toxin family. Long-chain subfamily. Type II alpha-neurotoxin sub-subfamily. Monomer in solution, homodimer in crystal state. Expressed by the venom gland.

The protein resides in the secreted. In terms of biological role, binds with high affinity to muscular (alpha-1/CHRNA1) and neuronal (alpha-7/CHRNA7) nicotinic acetylcholine receptor (nAChR) and inhibits acetylcholine from binding to the receptor, thereby impairing neuromuscular and neuronal transmission. The chain is Alpha-bungarotoxin isoform V31 from Bungarus multicinctus (Many-banded krait).